The primary structure comprises 168 residues: ATP synthase subunit b (168 aa).

The chain crosses the membrane as a helical span at residues 9 to 29 (AIPFGTIAYTLFIFLLLLVML).

This sequence belongs to the ATPase B chain family. In terms of assembly, F-type ATPases have 2 components, F(1) - the catalytic core - and F(0) - the membrane proton channel. F(1) has five subunits: alpha(3), beta(3), gamma(1), delta(1), epsilon(1). F(0) has three main subunits: a(1), b(2) and c(10-14). The alpha and beta chains form an alternating ring which encloses part of the gamma chain. F(1) is attached to F(0) by a central stalk formed by the gamma and epsilon chains, while a peripheral stalk is formed by the delta and b chains.

The protein localises to the cell membrane. Functionally, f(1)F(0) ATP synthase produces ATP from ADP in the presence of a proton or sodium gradient. F-type ATPases consist of two structural domains, F(1) containing the extramembraneous catalytic core and F(0) containing the membrane proton channel, linked together by a central stalk and a peripheral stalk. During catalysis, ATP synthesis in the catalytic domain of F(1) is coupled via a rotary mechanism of the central stalk subunits to proton translocation. In terms of biological role, component of the F(0) channel, it forms part of the peripheral stalk, linking F(1) to F(0). In Bacillus thuringiensis (strain Al Hakam), this protein is ATP synthase subunit b.